Consider the following 374-residue polypeptide: Phosphate acyltransferase (374 aa).

It belongs to the PlsX family. Homodimer. Probably interacts with PlsY.

It is found in the cytoplasm. The catalysed reaction is a fatty acyl-[ACP] + phosphate = an acyl phosphate + holo-[ACP]. Its pathway is lipid metabolism; phospholipid metabolism. Its function is as follows. Catalyzes the reversible formation of acyl-phosphate (acyl-PO(4)) from acyl-[acyl-carrier-protein] (acyl-ACP). This enzyme utilizes acyl-ACP as fatty acyl donor, but not acyl-CoA. The sequence is that of Phosphate acyltransferase from Gluconacetobacter diazotrophicus (strain ATCC 49037 / DSM 5601 / CCUG 37298 / CIP 103539 / LMG 7603 / PAl5).